The chain runs to 106 residues: Foxo1-corepressor (106 aa).

The tract at residues 1–44 is disordered; it reads MGGPTRRHQEEGSAECLGGPSTRAAPGPGLRDFHFTTAGPSKAD. Residues 78-87 carry the Nuclear export signal motif; it reads IGTLYIRLDL. Thr-93 is modified (phosphothreonine; by PKA).

In terms of assembly, interacts with FOXO1 (via N-terminal domain); the interaction is direct, occurs in a forskolin-independent manner that prevents SIRT1 binding to FOXO1. Interacts with FOXO3. Does not interact with FOXO4. In terms of processing, phosphorylated at Thr-93 by PKA, leading to import into the nucleus. As to expression, expressed in adipocytes. Expressed in brown and white adipose tissue but not in liver. Protein levels in brown and white adipose tissues decrease following fasting (at protein level). Expressed in white and brown adipose tissues. Expressed in adipocytes. Not expressed in liver, skeletal muscle and brain.

It localises to the cytoplasm. The protein resides in the cytosol. Its subcellular location is the nucleus. In terms of biological role, regulator of adipocytes that acts by repressing FOXO1 transcriptional activity. Acts by promoting acetylation of FOXO1, both by preventing the interaction between FOXO1 and SIRT1 deacetylase, and by mediating acetyltransferase activity in vitro. Regulates insulin sensitivity and energy metabolism. In Mus musculus (Mouse), this protein is Foxo1-corepressor (Fcor).